Here is a 285-residue protein sequence, read N- to C-terminus: Putative cytochrome c peroxidase, mitochondrial (285 aa).

Histidine 37 acts as the Proton acceptor in catalysis. Histidine 161 provides a ligand contact to heme b. Tryptophan 177 (tryptophan radical intermediate) is an active-site residue.

The protein belongs to the peroxidase family. Cytochrome c peroxidase subfamily. As to quaternary structure, forms a one-to-one complex with cytochrome c. Heme b serves as cofactor.

The protein localises to the mitochondrion matrix. Its subcellular location is the mitochondrion intermembrane space. The enzyme catalyses 2 Fe(II)-[cytochrome c] + H2O2 + 2 H(+) = 2 Fe(III)-[cytochrome c] + 2 H2O. Destroys radicals which are normally produced within the cells and which are toxic to biological systems. This Yarrowia lipolytica (strain CLIB 122 / E 150) (Yeast) protein is Putative cytochrome c peroxidase, mitochondrial.